Here is a 171-residue protein sequence, read N- to C-terminus: Allophycocyanin subunit beta-18 (171 aa).

Asparagine 72 bears the N4-methylasparagine mark. Cysteine 82 is a (2R,3E)-phycocyanobilin binding site.

Belongs to the phycobiliprotein family. As to quaternary structure, heterodimer of an alpha and a beta chain. In terms of processing, contains one covalently linked bilin chromophore.

It localises to the plastid. Its subcellular location is the chloroplast thylakoid membrane. Functionally, light-harvesting photosynthetic bile pigment-protein from the phycobiliprotein complex. Allophycocyanin has a maximum absorption at approximately 650 nanometers. This is Allophycocyanin subunit beta-18 (apcF) from Aglaothamnion neglectum (Red alga).